We begin with the raw amino-acid sequence, 61 residues long: Large ribosomal subunit protein bL28 (61 aa).

It belongs to the bacterial ribosomal protein bL28 family.

In Lacticaseibacillus paracasei (strain ATCC 334 / BCRC 17002 / CCUG 31169 / CIP 107868 / KCTC 3260 / NRRL B-441) (Lactobacillus paracasei), this protein is Large ribosomal subunit protein bL28.